A 791-amino-acid chain; its full sequence is RAS guanyl-releasing protein 1 (791 aa).

The region spanning 49-172 (LGKLSKGASL…RLIDTAQINS (124 aa)) is the N-terminal Ras-GEF domain. A ras exchanger motif region; required for transforming activity region spans residues 53 to 106 (SKGASLDELIQMCIQAFDLDGNMGQNNELLQIMLTMHGFLIPSTELLIKLRTLY). Residues 201–432 (EPQELAEHLT…YELSYAREPR (232 aa)) form the Ras-GEF domain. 2 EF-hand domains span residues 466 to 501 (HVQRMVDSVFKNYDLDQDGYISQEEFEKIAASFPFS) and 502 to 528 (FCVMDKDREGLISRQEITAYFMRASSI). 9 residues coordinate Ca(2+): aspartate 479, aspartate 481, aspartate 483, tyrosine 485, glutamate 490, aspartate 506, aspartate 508, glutamate 510, and glutamate 517. Residues 537–587 (LHNFQETTYLRPTFCDNCAGFLWGVIKQGYRCKDCGMNCHKQCKELVVFEC) form a Phorbol-ester/DAG-type zinc finger. The interval 671–715 (TQTENETQSLCLQVPSPPRSRTPDLTSHLPISPMPSPCPSPVPTR) is disordered. A compositionally biased stretch (polar residues) spans 672–681 (QTENETQSLC). The segment covering 702–712 (SPMPSPCPSPV) has biased composition (pro residues). Residues 728–783 (IRKARAELRGGKAGIQELEKEKVFLKEENTALKIQLKDAHRRVETLRAELRKYVLD) adopt a coiled-coil conformation.

The protein belongs to the RASGRP family.

The protein localises to the cytoplasm. Its subcellular location is the cytosol. The protein resides in the cell membrane. It is found in the golgi apparatus membrane. It localises to the endoplasmic reticulum membrane. Regulated by F-actin polymerization and probably by calcium. Functions as a diacylglycerol (DAG)-regulated nucleotide exchange factor specifically activating Ras through the exchange of bound GDP for GTP. This Xenopus laevis (African clawed frog) protein is RAS guanyl-releasing protein 1 (rasgrp1).